A 131-amino-acid chain; its full sequence is Putative gene 51 protein (131 aa).

The polypeptide is Putative gene 51 protein (51) (Bacillus phage SP01 (Bacteriophage SP01)).